The primary structure comprises 859 residues: DNA mismatch repair protein MutS (859 aa).

622–629 (GPNMGGKS) contacts ATP.

This sequence belongs to the DNA mismatch repair MutS family.

Its function is as follows. This protein is involved in the repair of mismatches in DNA. It is possible that it carries out the mismatch recognition step. This protein has a weak ATPase activity. The sequence is that of DNA mismatch repair protein MutS from Coxiella burnetii (strain Dugway 5J108-111).